Reading from the N-terminus, the 295-residue chain is Myosin light chain kinase A (295 aa).

The Protein kinase domain maps to 8–265; the sequence is YEFKEELGRG…ATNALNHPWL (258 aa). Residues 14 to 22 and Lys37 contribute to the ATP site; that span reads LGRGAFSIV. Asp130 functions as the Proton acceptor in the catalytic mechanism. Phosphothreonine is present on residues Thr166 and Thr289. The segment at 264 to 295 is autoinhibitory domain; the sequence is WLKSNNSNNTIDTVKMKEYIVERQKTQTKLVN.

Belongs to the protein kinase superfamily. CAMK Ser/Thr protein kinase family. CaMK subfamily. Post-translationally, autophosphorylated. Transiently phosphorylated on Thr-166 and Thr-289. This phosphorylation is gbpC-dependent.

The catalysed reaction is L-seryl-[myosin light chain] + ATP = O-phospho-L-seryl-[myosin light chain] + ADP + H(+). It catalyses the reaction L-threonyl-[myosin light chain] + ATP = O-phospho-L-threonyl-[myosin light chain] + ADP + H(+). Its activity is regulated as follows. Possesses an autoinhibitory domain. Autophosphorylation appears to increase the enzymatic activity. Activation is gbdC-dependent. Does not have a calmodulin-binding domain. Its function is as follows. Phosphorylates a specific serine in the N-terminus of a myosin light chain. Phosphorylates regulatory myosin light chain (mlcR) during chemotaxis. mlcR phosphorylation increases the motility and actin-activated ATPase activity of myosin, contributing to chemotaxis. This chain is Myosin light chain kinase A (mlkA), found in Dictyostelium discoideum (Social amoeba).